Consider the following 433-residue polypeptide: Steroid C26-monooxygenase (433 aa).

Gly202 contributes to the substrate binding site. Cys377 contributes to the heme binding site.

This sequence belongs to the cytochrome P450 family. Heme serves as cofactor.

It carries out the reaction cholest-4-en-3-one + 6 reduced [2Fe-2S]-[ferredoxin] + 3 O2 + 5 H(+) = (25S)-3-oxocholest-4-en-26-oate + 6 oxidized [2Fe-2S]-[ferredoxin] + 4 H2O. The protein operates within steroid metabolism; cholesterol degradation. Involved in the utilization of cholesterol as the sole carbon and energy source by degrading the side chain during infection. Primarily catalyzes the sequential oxidation of the terminal methyl of cholest-4-en-3-one into (25S)-26-hydroxycholest-4-en-3-one (alcohol), (25S)-26-oxocholest-4-en-3-one (aldehyde), to finally yield the carboxylic acid (25S)-3-oxocholest-4-en-26-oate. Also able to sequentially oxidize cholesterol itself, not only cholest-4-en-3-one. The polypeptide is Steroid C26-monooxygenase (cyp125) (Mycobacterium bovis (strain ATCC BAA-935 / AF2122/97)).